Reading from the N-terminus, the 191-residue chain is Thymidylate kinase (191 aa).

7–14 lines the ATP pocket; it reads GIDTAGKS.

This sequence belongs to the thymidylate kinase family.

The enzyme catalyses dTMP + ATP = dTDP + ADP. Its function is as follows. Phosphorylation of dTMP to form dTDP in both de novo and salvage pathways of dTTP synthesis. This chain is Thymidylate kinase, found in Sulfurimonas denitrificans (strain ATCC 33889 / DSM 1251) (Thiomicrospira denitrificans (strain ATCC 33889 / DSM 1251)).